Here is a 374-residue protein sequence, read N- to C-terminus: Tuliposide A-converting enzyme b3, amyloplastic (374 aa).

The N-terminal 68 residues, 1–68 (MSAALFCGPP…TNSSLSPSPT (68 aa)), are a transit peptide targeting the amyloplast. Residue Ser226 is the Acyl-ester intermediate of the active site. Residues Asp316 and His348 each act as charge relay system in the active site.

This sequence belongs to the AB hydrolase superfamily. Homodimer. As to expression, highly expressed in pistil and bulb scales. Lower expression in stem, and barely detected in root, leaf, petal and stamen.

It is found in the plastid. The protein resides in the amyloplast. It catalyses the reaction 6-tuliposide A = tulipalin A + D-glucose. Its function is as follows. Lactone-forming carboxylesterases, specifically catalyzing intramolecular transesterification, but not hydrolysis. Involved in the biosynthesis of tulipalins, defensive chemicals that show antimicrobial activities against a broad range of strains of bacteria and fungi. Substrates are 6-tuliposide A &gt; 6-tuliposide B. The sequence is that of Tuliposide A-converting enzyme b3, amyloplastic (TCEA-B3) from Tulipa gesneriana (Garden tulip).